The primary structure comprises 252 residues: Probable transcriptional regulatory protein A1C_04175 (252 aa).

It belongs to the TACO1 family.

It is found in the cytoplasm. This is Probable transcriptional regulatory protein A1C_04175 from Rickettsia akari (strain Hartford).